A 1025-amino-acid chain; its full sequence is Putative calcium-transporting ATPase 11, plasma membrane-type (1025 aa).

The Cytoplasmic segment spans residues 1 to 157 (MSNLLKDFEV…NRYTEKPARS (157 aa)). Residues 19 to 30 (ARQRWRSSVGLV) are interaction with calmodulin. The chain crosses the membrane as a helical span at residues 158-178 (FLTFVWEALQDITLIILMVCA). At 179-196 (VVSIGVGVATEGFPKGMY) the chain is on the lumenal side. Residues 197–217 (DGTGILLSIILVVMVTAISDY) traverse the membrane as a helical segment. Topologically, residues 218-345 (KQSLQFRDLD…EDETPLQVKL (128 aa)) are cytoplasmic. Residues 346–365 (NGVATIIGKIGLGFAVLTFV) traverse the membrane as a helical segment. Residues 366–395 (VLCIRFVVEKATAGSITEWSSEDALTLLDY) lie on the Lumenal side of the membrane. Residues 396 to 413 (FAIAVTIIVVAVPEGLPL) traverse the membrane as a helical segment. Residues 414–801 (AVTLSLAFAM…KWGRAVYINI (388 aa)) lie on the Cytoplasmic side of the membrane. Asp-451 (4-aspartylphosphate intermediate) is an active-site residue. Residues Asp-746 and Asp-750 each contribute to the Mg(2+) site. The helical transmembrane segment at 802-820 (QKFVQFQLTVNVVALIINF) threads the bilayer. Residues 821–831 (VSACITGSAPL) lie on the Lumenal side of the membrane. Residues 832–852 (TAVQLLWVNMIMDTLGALALA) traverse the membrane as a helical segment. Residues 853–872 (TEPPNEGLMKRQPIGRTASF) lie on the Cytoplasmic side of the membrane. A helical transmembrane segment spans residues 873–895 (ITRAMWRNIIGQSIYQLIVLGIL). The Lumenal portion of the chain corresponds to 896–907 (NFAGKQILNLNG). The chain crosses the membrane as a helical span at residues 908–929 (PDSTIVLNTIIFNSFVFCQVFN). The Cytoplasmic segment spans residues 930-947 (EVNSREIEKINVFEGMFK). The chain crosses the membrane as a helical span at residues 948–969 (SWVFVAVMTATVGFQVIIVEFL). Over 970–979 (GAFASTVPLS) the chain is Lumenal. The helical transmembrane segment at 980-1001 (WQHWLLCILIGSVSMILAVGLK) threads the bilayer. Topologically, residues 1002–1025 (CIPVESNRHHDGYELLPSGPSDSA) are cytoplasmic.

This sequence belongs to the cation transport ATPase (P-type) (TC 3.A.3) family. Type IIB subfamily.

The protein localises to the membrane. The catalysed reaction is Ca(2+)(in) + ATP + H2O = Ca(2+)(out) + ADP + phosphate + H(+). Its activity is regulated as follows. Activated by calmodulin. In terms of biological role, this magnesium-dependent enzyme catalyzes the hydrolysis of ATP coupled with the translocation of calcium from the cytosol out of the cell or into organelles. The chain is Putative calcium-transporting ATPase 11, plasma membrane-type (ACA11) from Arabidopsis thaliana (Mouse-ear cress).